The primary structure comprises 533 residues: DEAD-box ATP-dependent RNA helicase CshA (533 aa).

The Q motif motif lies at 2–30 (TTFRELGLSDSLLQSVESMGFEEATPIQA). The Helicase ATP-binding domain maps to 33–203 (IPHALQGKDI…ERFMTEPQHI (171 aa)). An ATP-binding site is contributed by 46–53 (AQTGTGKT). A DEAD box motif is present at residues 151–154 (DEAD). The Helicase C-terminal domain maps to 214–374 (NIQQFYLEVQ…RMDAPTLDEA (161 aa)). Residues 428–533 (TTPIALTSEP…ERKHHSRPQA (106 aa)) form a disordered region. The span at 458-512 (DGNRNRSRDGRGGGDGRNRDRNRDGRNRDGNRDRNRDGNRDRNRDGGSRGRRGEG) shows a compositional bias: basic and acidic residues. Over residues 524–533 (ERKHHSRPQA) the composition is skewed to basic residues.

It belongs to the DEAD box helicase family. CshA subfamily. As to quaternary structure, oligomerizes, may be a member of the RNA degradosome.

Its subcellular location is the cytoplasm. The catalysed reaction is ATP + H2O = ADP + phosphate + H(+). In terms of biological role, DEAD-box RNA helicase possibly involved in RNA degradation. May work in conjunction with the cold shock proteins to ensure proper initiation of transcription at low and optimal temperatures. Unwinds dsRNA in both 5'- and 3'-directions and shows RNA-dependent ATPase activity. Probably has a somewhat redundant function with cshB, as cshA can partially complement the growth effects of a cshB deletion. Plays a role in adaptation to cold, oxididant and pH stress. The protein is DEAD-box ATP-dependent RNA helicase CshA of Bacillus cereus (strain ATCC 14579 / DSM 31 / CCUG 7414 / JCM 2152 / NBRC 15305 / NCIMB 9373 / NCTC 2599 / NRRL B-3711).